The chain runs to 552 residues: Glutamine-dependent NAD(+) synthetase (552 aa).

Residues 11 to 253 (LRIAMAQFDF…DQWLVVDYAA (243 aa)) form the CN hydrolase domain. Glu-52 functions as the Proton acceptor; for glutaminase activity in the catalytic mechanism. The active-site For glutaminase activity is Lys-119. Tyr-125 is an L-glutamine binding site. Cys-157 functions as the Nucleophile; for glutaminase activity in the catalytic mechanism. Residues Ser-183 and Lys-189 each contribute to the L-glutamine site. The segment at 275–552 (AWRAVVRGLK…YPITNGYSGQ (278 aa)) is ligase. 298-305 (GLSGGIDS) provides a ligand contact to ATP. Asn-381 is a deamido-NAD(+) binding site. Thr-405 serves as a coordination point for ATP. Positions 410 and 522 each coordinate deamido-NAD(+).

In the C-terminal section; belongs to the NAD synthetase family.

It carries out the reaction deamido-NAD(+) + L-glutamine + ATP + H2O = L-glutamate + AMP + diphosphate + NAD(+) + H(+). The protein operates within cofactor biosynthesis; NAD(+) biosynthesis; NAD(+) from deamido-NAD(+) (L-Gln route): step 1/1. In terms of biological role, catalyzes the ATP-dependent amidation of deamido-NAD to form NAD. Uses L-glutamine as a nitrogen source. This chain is Glutamine-dependent NAD(+) synthetase, found in Xanthomonas campestris pv. campestris (strain 8004).